We begin with the raw amino-acid sequence, 466 residues long: Dihydrolipoyl dehydrogenase (466 aa).

FAD contacts are provided by residues 34–42, lysine 51, and glycine 114; that span reads ERVHLGGIC. Cysteine 42 and cysteine 47 are disulfide-bonded. NAD(+)-binding positions include 180-184, glutamate 203, and 269-272; these read GSGAI and AIGV. FAD contacts are provided by aspartate 311 and alanine 319. Histidine 445 (proton acceptor) is an active-site residue.

Belongs to the class-I pyridine nucleotide-disulfide oxidoreductase family. As to quaternary structure, homodimer. FAD is required as a cofactor.

The protein localises to the cytoplasm. The enzyme catalyses N(6)-[(R)-dihydrolipoyl]-L-lysyl-[protein] + NAD(+) = N(6)-[(R)-lipoyl]-L-lysyl-[protein] + NADH + H(+). In terms of biological role, lipoamide dehydrogenase is a component of the alpha-ketoacid dehydrogenase complexes. This is Dihydrolipoyl dehydrogenase (lpd) from Zymomonas mobilis subsp. mobilis (strain ATCC 31821 / ZM4 / CP4).